Reading from the N-terminus, the 296-residue chain is Inactive uridine phosphorylase B (296 aa).

Belongs to the PNP/UDP phosphorylase family. Homodimer.

In Schistosoma mansoni (Blood fluke), this protein is Inactive uridine phosphorylase B.